We begin with the raw amino-acid sequence, 88 residues long: Small ribosomal subunit protein bS20 (88 aa).

The protein belongs to the bacterial ribosomal protein bS20 family.

Binds directly to 16S ribosomal RNA. The sequence is that of Small ribosomal subunit protein bS20 from Desulforamulus reducens (strain ATCC BAA-1160 / DSM 100696 / MI-1) (Desulfotomaculum reducens).